The following is a 164-amino-acid chain: Phosphopantetheine adenylyltransferase (164 aa).

Residue Thr10 participates in substrate binding. Residues 10 to 11 (TF) and His18 contribute to the ATP site. Lys42, Leu74, and Arg88 together coordinate substrate. ATP contacts are provided by residues 89–91 (GIR), Glu99, and 124–130 (YAFVSST).

Belongs to the bacterial CoaD family. As to quaternary structure, homohexamer. The cofactor is Mg(2+).

It is found in the cytoplasm. It carries out the reaction (R)-4'-phosphopantetheine + ATP + H(+) = 3'-dephospho-CoA + diphosphate. It participates in cofactor biosynthesis; coenzyme A biosynthesis; CoA from (R)-pantothenate: step 4/5. Its function is as follows. Reversibly transfers an adenylyl group from ATP to 4'-phosphopantetheine, yielding dephospho-CoA (dPCoA) and pyrophosphate. The polypeptide is Phosphopantetheine adenylyltransferase (Tolumonas auensis (strain DSM 9187 / NBRC 110442 / TA 4)).